The following is a 285-amino-acid chain: RING finger protein 223 (285 aa).

The segment at 81–132 (CSICFSGYDNIFKTPKELSCSHVFCLECLARLAAAQPAGRSGREAVPCPFCR) adopts an RING-type zinc-finger fold. The chain crosses the membrane as a helical span at residues 230–250 (VALVSVLLLVLFCVILWPVQC).

Its subcellular location is the membrane. The sequence is that of RING finger protein 223 (Rnf223) from Mus musculus (Mouse).